We begin with the raw amino-acid sequence, 835 residues long: Cell division control protein 48 (835 aa).

A disordered region spans residues 1 to 21; it reads MGEEHKPLLDASGVDPREEDK. 257 to 263 provides a ligand contact to ATP; sequence PGTGKTL. Glycyl lysine isopeptide (Lys-Gly) (interchain with G-Cter in ubiquitin) cross-links involve residues lysine 305, lysine 322, and lysine 346. ATP is bound by residues asparagine 358 and histidine 394. Phosphoserine occurs at positions 472 and 519. A Glycyl lysine isopeptide (Lys-Gly) (interchain with G-Cter in ubiquitin) cross-link involves residue lysine 522. 531 to 536 contributes to the ATP binding site; the sequence is GTGKTL. Glycyl lysine isopeptide (Lys-Gly) (interchain with G-Cter in ubiquitin) cross-links involve residues lysine 539, lysine 594, and lysine 673. Residues 720-729 show a composition bias toward basic and acidic residues; it reads EAEKEVKVEG. The disordered stretch occupies residues 720–746; that stretch reads EAEKEVKVEGEDVEMTDEGAKAEQEPE. Threonine 735 carries the post-translational modification Phosphothreonine. Serine 770 is subject to Phosphoserine. Positions 792–835 are disordered; the sequence is SNFNFNDAPLGTTATDNANSNNSAPSGAGAAFGSNAEEDDDLYS. Positions 802-826 are enriched in low complexity; sequence GTTATDNANSNNSAPSGAGAAFGSN.

This sequence belongs to the AAA ATPase family. As to quaternary structure, component of the heterotrimeric CDC48-NPL4-UFD1 ATPase complex. The CDC48-NPL4-UFD1 ATPase complex interacts with the HRD1 ubiquitin ligase complex composed of the E3 ligase HRD1, its cofactors HRD3, USA1 and DER1, substrate recruiting factor YOS9 and CDC48-binding protein UBX2. Interaction between the complexes is mediated by interaction between CDC48-NPL4-UFD1 complex member CDC48 and HRD1 complex member UBX2. Forms a complex composed of CDC48, NPL4, UFD1, UFD2 and SHP1. Forms a complex composed of CDC48, NPL4, UFD1, DOA1, SHP1 and deubiquitinase OTU1; within the complex interacts with DOA1/UFD3 and OTU1 to prevent multiubiquitination of substrates. Interacts with UFD2, to add further ubiquitin moieties; the interaction with UFD2 is prevented by DOA1/UFD3. Forms a complex composed of CDC48, DOA1, deubiquitinase UBP3 and probably BRE5; within the complex interacts with DOA1 and UBP3. Interacts (via C-terminus) with DOA1 (via PUL domain); the interaction is direct. Interacts with NPL4. Interacts with SHP1/UBX1, UBX2, UBX3, UBX4, UBX5, UBX6 and UBX7. Interacts with VMS1; the interaction recruits CDC48 to the mitochondria in response to mitochondrial stress. Component of the ribosome quality control complex (RQC), composed of the E3 ubiquitin ligase RKR1/LTN1, RQC1 and RQC2, as well as CDC48 and its ubiquitin-binding cofactors. RQC forms a stable complex with 60S ribosomal subunits. Interacts with ASE1 and CDC5; the interaction is likely to result in their degradation. Component of the DSCc E3 ligase complexes composed of at least TUL1, DSC2, DSC3, UBX3, CDC48 as well as VLD1 for the vacuole-localized complex or GLD1 for the Golgi/endosome-localized complex.

The protein resides in the microsome. It is found in the endoplasmic reticulum. It localises to the cytoplasm. It carries out the reaction ATP + H2O = ADP + phosphate + H(+). Its activity is regulated as follows. The first ATP-binding region has low ATPase activity. The second ATP-binding region is responsible for ATPase activity. ATP binding to the first ATP-binding region induces intrinsic activity of the second ATP-binding region. While ATP binding to the first ATP-binding region appears to prevent ATP hydrolysis by the second ATP-binding region, ADP-binding to first region promotes the coordinate and cooperative ATPase cycle of the second ATP-binding region. ATP binding to the first ATP-binding region induces a conformational change, promoting the rotation of the first ATP-binding region relative to the second ATP-binding region in the hexamer. Functionally, ATP-dependent chaperone which probably uses the energy provided by ATP hydrolysis to generate mechanical force to unfold substrate proteins, disassemble protein complexes, and disaggregate protein aggregates. By recruiting and promoting the degradation of ubiquitinated proteins, plays a role in the ubiquitin fusion degradation (UFD) pathway. Has a role in the endoplasmic reticulum-associated degradation (ERAD) pathway which mediates the cytoplasmic elimination of misfolded proteins exported from the ER. Required for the proteasome-dependent processing/activation of MGA2 and SPT23 transcription factors leading to the subsequent expression of OLE1. Has an additional role in the turnover of OLE1 where it targets ubiquitinated OLE1 and other proteins to the ERAD. Regulates ubiquitin-mediated mitochondria protein degradation. Involved in spindle disassembly probably by promoting the degradation of spindle assembly factors ASE1 and CDC5 at the end of mitosis. Component of the ribosome quality control complex (RQC), a ribosome-associated complex that mediates ubiquitination and extraction of incompletely synthesized nascent chains for proteasomal degradation. CDC48 may provide the mechanical force that dislodges the polyubiquitinated nascent peptides from the exit channel. Required for ribophagy, a process which relocalizes ribosomal particles into the vacuole for degradation in response to starvation. Component of the DSC E3 ubiquitin ligase complexes that tag proteins present in Golgi, endosome and vacuole membranes and function in protein homeostasis under non-stress conditions and support a role in protein quality control. Substrate initially binds through the attached polyubiquitin chain to UDF1/NPL4 and then moves through the pore of the ATPase rings and is thereby unfolded. Acts on a broad range of even well-folded proteins via ubiquitin-binding and unfolding to initiate substrate processing. Involved in degradation of mislocalized tail-anchored transmembrane proteins extracted from the mitochondrion outer membrane by MSP1 and ubiquitinated by DOA10. This is Cell division control protein 48 from Saccharomyces cerevisiae (strain ATCC 204508 / S288c) (Baker's yeast).